The chain runs to 205 residues: Thiamine-phosphate synthase (205 aa).

4-amino-2-methyl-5-(diphosphooxymethyl)pyrimidine is bound by residues 35-39 and asparagine 67; that span reads QYRDK. Positions 68 and 86 each coordinate Mg(2+). A 4-amino-2-methyl-5-(diphosphooxymethyl)pyrimidine-binding site is contributed by threonine 105. Residue 132–134 coordinates 2-[(2R,5Z)-2-carboxy-4-methylthiazol-5(2H)-ylidene]ethyl phosphate; that stretch reads SQT. Position 135 (lysine 135) interacts with 4-amino-2-methyl-5-(diphosphooxymethyl)pyrimidine. A 2-[(2R,5Z)-2-carboxy-4-methylthiazol-5(2H)-ylidene]ethyl phosphate-binding site is contributed by glycine 162.

Belongs to the thiamine-phosphate synthase family. Requires Mg(2+) as cofactor.

It carries out the reaction 2-[(2R,5Z)-2-carboxy-4-methylthiazol-5(2H)-ylidene]ethyl phosphate + 4-amino-2-methyl-5-(diphosphooxymethyl)pyrimidine + 2 H(+) = thiamine phosphate + CO2 + diphosphate. The catalysed reaction is 2-(2-carboxy-4-methylthiazol-5-yl)ethyl phosphate + 4-amino-2-methyl-5-(diphosphooxymethyl)pyrimidine + 2 H(+) = thiamine phosphate + CO2 + diphosphate. The enzyme catalyses 4-methyl-5-(2-phosphooxyethyl)-thiazole + 4-amino-2-methyl-5-(diphosphooxymethyl)pyrimidine + H(+) = thiamine phosphate + diphosphate. It functions in the pathway cofactor biosynthesis; thiamine diphosphate biosynthesis; thiamine phosphate from 4-amino-2-methyl-5-diphosphomethylpyrimidine and 4-methyl-5-(2-phosphoethyl)-thiazole: step 1/1. Functionally, condenses 4-methyl-5-(beta-hydroxyethyl)thiazole monophosphate (THZ-P) and 2-methyl-4-amino-5-hydroxymethyl pyrimidine pyrophosphate (HMP-PP) to form thiamine monophosphate (TMP). This Pseudomonas syringae pv. tomato (strain ATCC BAA-871 / DC3000) protein is Thiamine-phosphate synthase.